A 1200-amino-acid polypeptide reads, in one-letter code: Nuclear envelope pore membrane protein POM 121 (1200 aa).

The tract at residues 1-29 is disordered; that stretch reads MSPAAAAADGGERRRPPLGGREGRSRARG. The interval 1–56 is cisternal side; the sequence is MSPAAAAADGGERRRPPLGGREGRSRARGYGGPAGAAALGLALLGLALYLVPAAAA. Positions 10 to 25 are enriched in basic and acidic residues; it reads GGERRRPPLGGREGRS. Residues 57–77 form a helical membrane-spanning segment; that stretch reads LAWLAVGASAAWWGLSREPRG. Residues 76 to 1200 form a pore side region; the sequence is RGPRALSSFV…QARRQHTRKK (1125 aa). Ser-83 carries the post-translational modification Phosphoserine. Disordered stretches follow at residues 91 to 167 and 177 to 196; these read HPRP…SAVQ and PTPLLRPSRRPPHRDCGPLS. Residues 143–152 are compositionally biased toward basic and acidic residues; the sequence is LRQDPRERPG. Ser-244 bears the Phosphoserine mark. Disordered stretches follow at residues 294–328, 345–509, 530–627, 640–692, 706–744, 1075–1151, and 1173–1200; these read KKKRTVAEEDQLHLDGQENKRRRHDSGGSGHSAFE, SLKR…ITAE, PDDA…SDSK, SITP…LATP, PATPKSESDSPLPSSSSAATTASSSTAPPTAASTTPTFK, TSGT…SSLS, and PSFSIGAGSKTPGARQRLQARRQHTRKK. The span at 298 to 312 shows a compositional bias: basic and acidic residues; it reads TVAEEDQLHLDGQEN. 7 positions are modified to phosphoserine: Ser-319, Ser-322, Ser-325, Ser-345, Ser-355, Ser-367, and Ser-370. The segment covering 365–374 has biased composition (low complexity); the sequence is TSSVSSLASA. The span at 379-397 shows a compositional bias: polar residues; it reads IPSSSRNAITSSYSSTRGI. Over residues 404 to 419 the composition is skewed to low complexity; it reads SGPTSSPFSSPASSRS. 6 positions are modified to phosphoserine: Ser-408, Ser-409, Ser-412, Ser-413, Ser-416, and Ser-417. Basic and acidic residues-rich tracts occupy residues 424–433 and 446–456; these read RPAKKTREEE and TDKESPGEKVT. 4 stretches are compositionally biased toward low complexity: residues 463–477, 546–574, 581–598, and 605–621; these read QQSSWTSPPTPGSSG, PPFTFTLPAVGPAASPASLPAPSSNPLLE, ESPAPSSSEPAEAATVAA, and PSLLAPLVSPLAGPLAS. Positions 640-657 are enriched in polar residues; the sequence is SITPLTDSKSSGVSQAEQ. Low complexity-rich tracts occupy residues 658–669, 681–692, 715–742, and 1075–1099; these read SVSTPASTASSP, SPPASSSSLATP, SPLPSSSSAATTASSSTAPPTAASTTPT, and TSGTFSFGSGQSGTPGTTTSFGSLS. Residues 1100 to 1121 show a composition bias toward polar residues; it reads QNTLGAPSQGSPFAFSVGSTPE. Positions 1190 to 1200 are enriched in basic residues; it reads LQARRQHTRKK.

This sequence belongs to the POM121 family. Post-translationally, proteolytically cleaved by caspase-3 during apoptosis.

It localises to the nucleus. The protein localises to the nuclear pore complex. Its subcellular location is the nucleus membrane. It is found in the endoplasmic reticulum membrane. In terms of biological role, essential component of the nuclear pore complex (NPC). The repeat-containing domain may be involved in anchoring components of the pore complex to the pore membrane. When overexpressed in cells induces the formation of cytoplasmic annulate lamellae (AL). In Mus musculus (Mouse), this protein is Nuclear envelope pore membrane protein POM 121 (Pom121).